A 187-amino-acid chain; its full sequence is MPGKLIWLVGPSGSGKDSLLAALRQREHPQLLVAHRYITRPFNAGSENHIALSEHEFFTRAEQHLFALSWHANNTYYGIGVEIDLWLHAGFDVVANGSRAHLALARERYGEVLVPICLAVSPPVLRQRLEQRGRENALEIAQRLDRAARYKPDNCLTLNNDGSLRQSVDEFFRLLRSHAAREADQLV.

10–17 (GPSGSGKD) contacts ATP.

Belongs to the ribose 1,5-bisphosphokinase family.

The enzyme catalyses alpha-D-ribose 1,5-bisphosphate + ATP = 5-phospho-alpha-D-ribose 1-diphosphate + ADP. The protein operates within metabolic intermediate biosynthesis; 5-phospho-alpha-D-ribose 1-diphosphate biosynthesis; 5-phospho-alpha-D-ribose 1-diphosphate from D-ribose 5-phosphate (route II): step 3/3. Functionally, catalyzes the phosphorylation of ribose 1,5-bisphosphate to 5-phospho-D-ribosyl alpha-1-diphosphate (PRPP). This chain is Ribose 1,5-bisphosphate phosphokinase PhnN, found in Klebsiella pneumoniae subsp. pneumoniae (strain ATCC 700721 / MGH 78578).